Consider the following 335-residue polypeptide: Holliday junction branch migration complex subunit RuvB (335 aa).

Residues 4–184 (ADRIISSNAQ…FGIVQRLEFY (181 aa)) form a large ATPase domain (RuvB-L) region. ATP contacts are provided by residues isoleucine 23, arginine 24, glycine 65, lysine 68, threonine 69, threonine 70, 131 to 133 (EDY), arginine 174, tyrosine 184, and arginine 221. Position 69 (threonine 69) interacts with Mg(2+). The tract at residues 185-255 (SVEDLTSIVA…IAKSALSMLD (71 aa)) is small ATPAse domain (RuvB-S). The tract at residues 258–335 (QAGFDYLDRK…RHFGLDKLTE (78 aa)) is head domain (RuvB-H). Positions 294, 313, and 318 each coordinate DNA.

Belongs to the RuvB family. In terms of assembly, homohexamer. Forms an RuvA(8)-RuvB(12)-Holliday junction (HJ) complex. HJ DNA is sandwiched between 2 RuvA tetramers; dsDNA enters through RuvA and exits via RuvB. An RuvB hexamer assembles on each DNA strand where it exits the tetramer. Each RuvB hexamer is contacted by two RuvA subunits (via domain III) on 2 adjacent RuvB subunits; this complex drives branch migration. In the full resolvosome a probable DNA-RuvA(4)-RuvB(12)-RuvC(2) complex forms which resolves the HJ.

The protein resides in the cytoplasm. It carries out the reaction ATP + H2O = ADP + phosphate + H(+). Its function is as follows. The RuvA-RuvB-RuvC complex processes Holliday junction (HJ) DNA during genetic recombination and DNA repair, while the RuvA-RuvB complex plays an important role in the rescue of blocked DNA replication forks via replication fork reversal (RFR). RuvA specifically binds to HJ cruciform DNA, conferring on it an open structure. The RuvB hexamer acts as an ATP-dependent pump, pulling dsDNA into and through the RuvAB complex. RuvB forms 2 homohexamers on either side of HJ DNA bound by 1 or 2 RuvA tetramers; 4 subunits per hexamer contact DNA at a time. Coordinated motions by a converter formed by DNA-disengaged RuvB subunits stimulates ATP hydrolysis and nucleotide exchange. Immobilization of the converter enables RuvB to convert the ATP-contained energy into a lever motion, pulling 2 nucleotides of DNA out of the RuvA tetramer per ATP hydrolyzed, thus driving DNA branch migration. The RuvB motors rotate together with the DNA substrate, which together with the progressing nucleotide cycle form the mechanistic basis for DNA recombination by continuous HJ branch migration. Branch migration allows RuvC to scan DNA until it finds its consensus sequence, where it cleaves and resolves cruciform DNA. This chain is Holliday junction branch migration complex subunit RuvB, found in Mannheimia succiniciproducens (strain KCTC 0769BP / MBEL55E).